Here is a 590-residue protein sequence, read N- to C-terminus: Glypican-3 (590 aa).

Positions 1–25 (MMPGLKLYGALILCVLVLPFSRPSS) are cleaved as a signal peptide. Cystine bridges form between cysteine 30/cysteine 67, cysteine 60/cysteine 255, cysteine 68/cysteine 258, cysteine 190/cysteine 342, cysteine 245/cysteine 278, cysteine 267/cysteine 418, and cysteine 271/cysteine 406. Asparagine 119 and asparagine 234 each carry an N-linked (GlcNAc...) asparagine glycan. Asparagine 414 carries an N-linked (GlcNAc...) asparagine glycan. Disordered regions lie at residues 429–450 (PGPGLKRVHPHGSESKQKTPEP) and 476–520 (WRAR…SGLG). Positions 495-513 (TDEDEEGLESGDCDDEDEC) are enriched in acidic residues. 2 O-linked (Xyl...) (glycosaminoglycan) serine glycosylation sites follow: serine 504 and serine 517.

The protein belongs to the glypican family. In terms of assembly, heterodimer; disulfide-linked. Cleavage by a furin-like convertase results in production of alpha and beta chains which form a disulfide-linked heterodimer. Post-translationally, O-glycosylated; contains heparan sulfate and/or chondroitin sulfate. Cleaved intracellularly by a furin-like convertase to generate 2 subunits, alpha and beta, which remain associated through disulfide bonds and are associated with the cell surface via the GPI-anchor. This processing is essential for its role in inhibition of hedgehog signaling. A second proteolytic event may result in cleavage of the protein on the cell surface, separating it from the GPI-anchor and leading to its shedding from the cell surface. Maternally expressed and is almost ubiquitous during blastula and gastrula stages but becomes restricted to the prospective hindbrain by 24 hours post-fertilization.

Its subcellular location is the cell membrane. In terms of biological role, cell surface proteoglycan. Negatively regulates the hedgehog signaling pathway. Positively regulates the canonical and non-canonical Wnt signaling pathways. Binds to CD81 which decreases the availability of free CD81 for binding to the transcriptional repressor HHEX, resulting in nuclear translocation of HHEX and transcriptional repression. Inhibits the dipeptidyl peptidase activity of DPP4. Plays a role in limb patterning and skeletal development. Modulates the effects of growth factors on renal branching morphogenesis. Required for coronary vascular development. Plays a role in regulating cell movements during gastrulation. In Danio rerio (Zebrafish), this protein is Glypican-3.